Consider the following 92-residue polypeptide: Alpha-conotoxin-like Mi20.2 (92 aa).

An N-terminal signal peptide occupies residues M1–E24. The propeptide occupies Q25–R45. At E49 the chain carries 4-carboxyglutamate. Position 55 is a 4-hydroxyproline (P55). 4 disulfides stabilise this stretch: C63-C72, C68-C80, C73-C90, and C78-C92.

It belongs to the conotoxin D superfamily. As to quaternary structure, hetero-, homo- or pseudo-homodimer (identical sequence, different post-translational modifications). In terms of tissue distribution, expressed by the venom duct.

The protein localises to the secreted. Its function is as follows. Alpha-conotoxins act on postsynaptic membranes, they bind to the nicotinic acetylcholine receptors (nAChR) and thus inhibit them. Through its two C-terminal domains, this homodimeric protein would bind to two nAChR allosteric sites, located outside the nAChR C-loop of the principal binding face and at the adjacent binding interface in a clockwise direction. This toxin specifically blocks mammalian neuronal nAChR of the alpha-7/CHRNA7, alpha-3-beta-2/CHRNA3-CHRNB2 and alpha-4-beta-2/CHRNA4-CHRNB2 subtypes. This Conus miles (Soldier cone) protein is Alpha-conotoxin-like Mi20.2.